The primary structure comprises 161 residues: 2-C-methyl-D-erythritol 2,4-cyclodiphosphate synthase (161 aa).

Asp10 and His12 together coordinate a divalent metal cation. 4-CDP-2-C-methyl-D-erythritol 2-phosphate contacts are provided by residues 10–12 (DVH) and 36–37 (HS). His44 contributes to the a divalent metal cation binding site. 4-CDP-2-C-methyl-D-erythritol 2-phosphate is bound by residues 58 to 60 (DIG), 63 to 67 (FPDTD), 102 to 108 (AQAPKMA), 134 to 137 (TTTE), Phe141, and Arg144.

Belongs to the IspF family. As to quaternary structure, homotrimer. The cofactor is a divalent metal cation.

It carries out the reaction 4-CDP-2-C-methyl-D-erythritol 2-phosphate = 2-C-methyl-D-erythritol 2,4-cyclic diphosphate + CMP. Its pathway is isoprenoid biosynthesis; isopentenyl diphosphate biosynthesis via DXP pathway; isopentenyl diphosphate from 1-deoxy-D-xylulose 5-phosphate: step 4/6. Involved in the biosynthesis of isopentenyl diphosphate (IPP) and dimethylallyl diphosphate (DMAPP), two major building blocks of isoprenoid compounds. Catalyzes the conversion of 4-diphosphocytidyl-2-C-methyl-D-erythritol 2-phosphate (CDP-ME2P) to 2-C-methyl-D-erythritol 2,4-cyclodiphosphate (ME-CPP) with a corresponding release of cytidine 5-monophosphate (CMP). The sequence is that of 2-C-methyl-D-erythritol 2,4-cyclodiphosphate synthase from Shewanella baltica (strain OS155 / ATCC BAA-1091).